An 876-amino-acid chain; its full sequence is Alanine--tRNA ligase (876 aa).

Position 74 is an N6-acetyllysine (Lys74). The Zn(2+) site is built by His564, His568, Cys666, and His670.

This sequence belongs to the class-II aminoacyl-tRNA synthetase family. Homotetramer. Zn(2+) is required as a cofactor.

It localises to the cytoplasm. The catalysed reaction is tRNA(Ala) + L-alanine + ATP = L-alanyl-tRNA(Ala) + AMP + diphosphate. Its function is as follows. Catalyzes the attachment of alanine to tRNA(Ala) in a two-step reaction: alanine is first activated by ATP to form Ala-AMP and then transferred to the acceptor end of tRNA(Ala). Also edits incorrectly charged Ser-tRNA(Ala) and Gly-tRNA(Ala) via its editing domain. This is Alanine--tRNA ligase from Shigella sonnei (strain Ss046).